The sequence spans 159 residues: Probable GPI-anchored protein ANS1 (159 aa).

Positions 1–20 are cleaved as a signal peptide; the sequence is MKCTLVSTLFAITNILVAHA. One copy of the PIR1/2/3 repeat lies at 101–114; it reads AAISQISDGQIQAT. Glycine 137 carries the GPI-anchor amidated glycine lipid modification. A propeptide spans 138-159 (removed in mature form); that stretch reads AGMKVESKNMGYIVGVAALLFL.

Its subcellular location is the cell membrane. This is Probable GPI-anchored protein ANS1 (ANS1) from Saccharomyces cerevisiae (strain ATCC 204508 / S288c) (Baker's yeast).